The following is a 207-amino-acid chain: 5-amino-6-(5-phosphoribosylamino)uracil reductase (207 aa).

Ser-6 serves as a coordination point for substrate. Trp-8 is a binding site for NADP(+). Arg-22 contacts substrate. Asp-38 lines the NADP(+) pocket. 2 residues coordinate substrate: Leu-42 and Arg-45. Ser-72 is an NADP(+) binding site. Residue Glu-137 participates in substrate binding.

The protein belongs to the HTP reductase family.

The enzyme catalyses 5-amino-6-(5-phospho-D-ribitylamino)uracil + NADP(+) = 5-amino-6-(5-phospho-D-ribosylamino)uracil + NADPH + H(+). The protein operates within cofactor biosynthesis; riboflavin biosynthesis; 5-amino-6-(D-ribitylamino)uracil from GTP: step 3/4. This Buchnera aphidicola subsp. Acyrthosiphon pisum (strain APS) (Acyrthosiphon pisum symbiotic bacterium) protein is 5-amino-6-(5-phosphoribosylamino)uracil reductase (ribD2).